We begin with the raw amino-acid sequence, 782 residues long: General transcription and DNA repair factor IIH helicase/translocase subunit XPB (782 aa).

Basic and acidic residues predominate over residues 1–11; sequence MGKRDRADRDK. Disordered regions lie at residues 1–51 and 218–241; these read MGKR…ESGT and SAISKTAESSGGPSTSRVTDPQGK. The Nuclear localization signal signature appears at 6 to 18; that stretch reads RADRDKKKSRKRH. Over residues 21-30 the composition is skewed to acidic residues; the sequence is DEEDDEEDAP. Positions 218–236 are enriched in polar residues; the sequence is SAISKTAESSGGPSTSRVT. The region spanning 327-488 is the Helicase ATP-binding domain; that stretch reads MFGNGRARSG…DLNFLIGPKL (162 aa). Residue 340–347 coordinates ATP; that stretch reads LPCGAGKS. The DEVH box motif lies at 441–444; it reads DEVH. The Helicase C-terminal domain occupies 542–702; sequence RACQFLIKFH…LAGMEEEDLA (161 aa). Ser-686 is subject to Phosphoserine. A Phosphoserine; by CK2 modification is found at Ser-751.

The protein belongs to the helicase family. RAD25/XPB subfamily. In terms of assembly, component of the 7-subunit TFIIH core complex composed of XPB/ERCC3, XPD/ERCC2, GTF2H1, GTF2H2, GTF2H3, GTF2H4 and GTF2H5, which is active in NER. The core complex associates with the 3-subunit CDK-activating kinase (CAK) module composed of CCNH/cyclin H, CDK7 and MNAT1 to form the 10-subunit holoenzyme (holo-TFIIH) active in transcription. Interacts with PUF60. Interacts with ATF7IP. Interacts with KAT2A; leading to KAT2A recruitment to promoters and acetylation of histones. Part of TBP-based Pol II pre-initiation complex (PIC), in which Pol II core assembles with general transcription factors and other specific initiation factors including GTF2E1, GTF2E2, GTF2F1, GTF2F2, TCEA1, ERCC2, ERCC3, GTF2H2, GTF2H3, GTF2H4, GTF2H5, GTF2A1, GTF2A2, GTF2B and TBP; this large multi-subunit PIC complex mediates DNA unwinding and targets Pol II core to the transcription start site where the first phosphodiester bond forms. In terms of processing, phosphorylation on Ser-751 by CK2 controls the 5'-excision activity of ERCC1-XPF endonuclease; phosphorylated protein inhibits the excision activity and thus NER. Dephosphorylation reactivates the 5'-excision step. Phosphorylation has no effect on transcription or the 3'-5' helicase activity.

The protein resides in the nucleus. The catalysed reaction is Couples ATP hydrolysis with the unwinding of duplex DNA by translocating in the 3'-5' direction.. It catalyses the reaction ATP + H2O = ADP + phosphate + H(+). Phosphorylation on Ser-751 by CK2 controls the 5'-excision activity of ERCC1-XPF endonuclease; phosphorylated protein inhibits the excision activity and thus NER. ATPase activity is stimulated by TFIIH subunit p52 (GTF2H4). DNA translocase activity by this subunit in TFIIH is stimulated by XPA, ERCC5/XPG and XFP plus ERCC1. In terms of biological role, ATP-dependent 3'-5' DNA helicase/translocase; binds dsDNA rather than ssDNA, unzipping it in a translocase rather than classical helicase activity. Component of the general transcription and DNA repair factor IIH (TFIIH) core complex. When complexed to CDK-activating kinase (CAK), involved in RNA transcription by RNA polymerase II. The ATPase activity of XPB/ERCC3, but not its helicase activity, is required for DNA opening; it may wrap around the damaged DNA wedging it open, causing localized melting and twisting that allows XPD/ERCC2 helicase to anchor. The ATP-dependent helicase activity of XPB/ERCC3 may be required for promoter escape. Also involved in transcription-coupled nucleotide excision repair (NER) of damaged DNA. In NER, TFIIH acts by opening DNA around the lesion to allow the excision of the damaged oligonucleotide and its replacement by a new DNA fragment. The structure of the TFIIH transcription complex differs from the NER-TFIIH complex; large movements by XPD/ERCC2 and XPB/ERCC3 are stabilized by XPA. This Pongo abelii (Sumatran orangutan) protein is General transcription and DNA repair factor IIH helicase/translocase subunit XPB (ERCC3).